We begin with the raw amino-acid sequence, 125 residues long: Small ribosomal subunit protein uS12m (125 aa).

The tract at residues 1 to 24 is disordered; sequence MPTSNQSIRHGREKKRRTDRTRAL. The span at 9–19 shows a compositional bias: basic residues; that stretch reads RHGREKKRRTD.

It belongs to the universal ribosomal protein uS12 family.

Its subcellular location is the mitochondrion. Protein S12 is involved in the translation initiation step. The protein is Small ribosomal subunit protein uS12m (RPS12) of Pinus sylvestris (Scotch pine).